The sequence spans 600 residues: Proline--tRNA ligase (600 aa).

The protein belongs to the class-II aminoacyl-tRNA synthetase family. ProS type 1 subfamily. In terms of assembly, homodimer.

It localises to the cytoplasm. It catalyses the reaction tRNA(Pro) + L-proline + ATP = L-prolyl-tRNA(Pro) + AMP + diphosphate. In terms of biological role, catalyzes the attachment of proline to tRNA(Pro) in a two-step reaction: proline is first activated by ATP to form Pro-AMP and then transferred to the acceptor end of tRNA(Pro). As ProRS can inadvertently accommodate and process non-cognate amino acids such as alanine and cysteine, to avoid such errors it has two additional distinct editing activities against alanine. One activity is designated as 'pretransfer' editing and involves the tRNA(Pro)-independent hydrolysis of activated Ala-AMP. The other activity is designated 'posttransfer' editing and involves deacylation of mischarged Ala-tRNA(Pro). The misacylated Cys-tRNA(Pro) is not edited by ProRS. The sequence is that of Proline--tRNA ligase from Prochlorococcus marinus (strain MIT 9211).